A 347-amino-acid polypeptide reads, in one-letter code: Dihydroorotate dehydrogenase (quinone) (347 aa).

FMN is bound by residues 61–65 and Thr85; that span reads AGLDK. Lys65 is a binding site for substrate. A substrate-binding site is contributed by 110-114; that stretch reads NRMGF. Residues Asn138 and Asn171 each contribute to the FMN site. Asn171 is a binding site for substrate. The active-site Nucleophile is Ser174. Asn176 provides a ligand contact to substrate. Lys216 and Thr244 together coordinate FMN. Residue 245–246 participates in substrate binding; the sequence is NT. FMN-binding positions include Gly267, Gly296, and 317 to 318; that span reads YT.

This sequence belongs to the dihydroorotate dehydrogenase family. Type 2 subfamily. As to quaternary structure, monomer. Requires FMN as cofactor.

The protein localises to the cell membrane. The catalysed reaction is (S)-dihydroorotate + a quinone = orotate + a quinol. The protein operates within pyrimidine metabolism; UMP biosynthesis via de novo pathway; orotate from (S)-dihydroorotate (quinone route): step 1/1. Catalyzes the conversion of dihydroorotate to orotate with quinone as electron acceptor. This Azotobacter vinelandii (strain DJ / ATCC BAA-1303) protein is Dihydroorotate dehydrogenase (quinone).